The following is a 573-amino-acid chain: Protein DSE1 (573 aa).

WD repeat units lie at residues 144–185 (DFPP…GCAK), 315–351 (RKNT…GKPV), 356–395 (AKKG…NMKY), and 397–448 (ELVH…NGKG). Residues 500–509 (SDSSMLSLSN) are compositionally biased toward low complexity. The tract at residues 500-519 (SDSSMLSLSNESDHSMTETS) is disordered. A Glycyl lysine isopeptide (Lys-Gly) (interchain with G-Cter in ubiquitin) cross-link involves residue Lys553.

This sequence belongs to the WD repeat DSE1 family.

It is found in the bud neck. Involved in cell wall metabolism and required for the separation of the mother and daughter cells. This chain is Protein DSE1 (DSE1), found in Saccharomyces cerevisiae (strain ATCC 204508 / S288c) (Baker's yeast).